The following is a 472-amino-acid chain: Endoplasmic reticulum oxidoreductin-2 (472 aa).

A signal peptide spans Met-1–Ala-37. The N-linked (GlcNAc...) asparagine glycan is linked to Asn-44. 6 disulfide bridges follow: Cys-55–Cys-74, Cys-57–Cys-72, Cys-111–Cys-371, Cys-120–Cys-125, Cys-221–Cys-230, and Cys-374–Cys-377. Positions 200, 202, and 213 each coordinate FAD. 2 residues coordinate FAD: Ser-241 and His-244. N-linked (GlcNAc...) asparagine glycosylation occurs at Asn-267. FAD contacts are provided by Arg-274 and Arg-281. N-linked (GlcNAc...) asparagine glycosylation occurs at Asn-364.

This sequence belongs to the EROs family. As to quaternary structure, may function both as a monomer and a homodimer. The cofactor is FAD. In terms of processing, N-glycosylated.

The protein localises to the endoplasmic reticulum membrane. Its function is as follows. Essential oxidoreductase that oxidizes proteins in the endoplasmic reticulum to produce disulfide bonds. Acts by oxidizing directly PDI isomerase through a direct disulfide exchange. Does not act as a direct oxidant of folding substrate, but relies on PDI to transfer oxidizing equivalent. Does not oxidize all PDI related proteins, suggesting that it can discriminate between PDI and related proteins. Its reoxidation probably involves electron transfer to molecular oxygen via FAD. Acts independently of glutathione. May be responsible for a significant proportion of reactive oxygen species (ROS) in the cell, thereby being a source of oxidative stress. This Arabidopsis thaliana (Mouse-ear cress) protein is Endoplasmic reticulum oxidoreductin-2 (AERO2).